Reading from the N-terminus, the 283-residue chain is Small ribosomal subunit protein uS2 (283 aa).

The segment at 229-283 (RSAGKSGEQPAEAEPMPDWERELLEGDGAKTEAKAEEPKAEAKKADEAPEAEKSN) is disordered. Positions 246 to 283 (DWERELLEGDGAKTEAKAEEPKAEAKKADEAPEAEKSN) are enriched in basic and acidic residues.

Belongs to the universal ribosomal protein uS2 family.

The polypeptide is Small ribosomal subunit protein uS2 (Cutibacterium acnes (strain DSM 16379 / KPA171202) (Propionibacterium acnes)).